The sequence spans 81 residues: Protein Vpu (81 aa).

Topologically, residues 1–7 (MQPLQIL) are extracellular. The chain crosses the membrane as a helical span at residues 8–28 (AIVALVVAAIIAIVVWTIVYI). The Cytoplasmic segment spans residues 29–81 (EYRKILRQRKIDRLIDRITERAEDSGNESEGDQEELSALVERGHLAPWDVDDL). The disordered stretch occupies residues 50–81 (AEDSGNESEGDQEELSALVERGHLAPWDVDDL). 2 positions are modified to phosphoserine; by host CK2: serine 53 and serine 57. Acidic residues predominate over residues 53 to 63 (SGNESEGDQEE).

The protein belongs to the HIV-1 VPU protein family. As to quaternary structure, homopentamer. Interacts with host CD4 and BRTC; these interactions induce proteasomal degradation of CD4. Interacts with host BST2; this interaction leads to the degradation of host BST2. Interacts with host FBXW11. Interacts with host AP1M1; this interaction plays a role in the mistrafficking and subsequent degradation of host BST2. Interacts with host RANBP2; this interaction allows Vpu to down-regulate host BLM sumoylation. Post-translationally, phosphorylated by host CK2. This phosphorylation is necessary for interaction with human BTRC and degradation of CD4.

Its subcellular location is the host membrane. Ion channel activity is inhibited by hexamethylene amiloride in vitro. Enhances virion budding by targeting host CD4 and Tetherin/BST2 to proteasome degradation. Degradation of CD4 prevents any unwanted premature interactions between viral Env and its host receptor CD4 in the endoplasmic reticulum. Degradation of antiretroviral protein Tetherin/BST2 is important for virion budding, as BST2 tethers new viral particles to the host cell membrane. Mechanistically, Vpu bridges either CD4 or BST2 to BTRC, a substrate recognition subunit of the Skp1/Cullin/F-box protein E3 ubiquitin ligase, induces their ubiquitination and subsequent proteasomal degradation. The alteration of the E3 ligase specificity by Vpu seems to promote the degradation of host IKBKB, leading to NF-kappa-B down-regulation and subsequent apoptosis. Acts as a viroporin that forms an oligomeric ion channel in membranes. Modulates the host DNA repair mechanisms to promote degradation of nuclear viral cDNA in cells that are already productively infected in order to suppress immune sensing and proviral hyper-integration (superinfection). Manipulates PML-NBs and modulates SUMOylation of host BLM protein thereby enhancing its DNA-end processing activity toward viral unintegrated linear DNA. Also inhibits RAD52-mediated homologous repair of viral cDNA, preventing the generation of dead-end circular forms of single copies of the long terminal repeat and permitting sustained nucleolytic attack. The sequence is that of Protein Vpu from Human immunodeficiency virus type 1 group M subtype B (isolate SF162) (HIV-1).